Here is a 502-residue protein sequence, read N- to C-terminus: 4,4'-diapophytoene desaturase (4,4'-diaponeurosporene-forming) (502 aa).

5–17 is an FAD binding site; that stretch reads VIGAGVTGLAAAA.

This sequence belongs to the carotenoid/retinoid oxidoreductase family. CrtN subfamily.

It carries out the reaction 15-cis-4,4'-diapophytoene + 3 FAD + 3 H(+) = all-trans-4,4'-diaponeurosporene + 3 FADH2. It participates in carotenoid biosynthesis; staphyloxanthin biosynthesis; staphyloxanthin from farnesyl diphosphate: step 2/5. Functionally, involved in the biosynthesis of the yellow-orange carotenoid staphyloxanthin, which plays a role in the virulence via its protective function against oxidative stress. Catalyzes three successive dehydrogenation reactions that lead to the introduction of three double bonds into 4,4'-diapophytoene (dehydrosqualene), with 4,4'-diapophytofluene and 4,4'-diapo-zeta-carotene as intermediates, and 4,4'-diaponeurosporene (the major deep-yellow pigment in staphylococci strains) as the end product. This is 4,4'-diapophytoene desaturase (4,4'-diaponeurosporene-forming) from Staphylococcus aureus (strain bovine RF122 / ET3-1).